Here is a 563-residue protein sequence, read N- to C-terminus: Pyruvate decarboxylase isozyme 2 (563 aa).

Pyruvate is bound by residues aspartate 28, histidine 115, tyrosine 157, and arginine 224. Thiamine diphosphate-binding positions include threonine 390 and 413 to 415; that span reads GSI. Residue aspartate 444 coordinates Mg(2+). Residues 445–446 and 471–476 each bind thiamine diphosphate; these read GS and NNGYTI. Mg(2+) contacts are provided by asparagine 471 and glycine 473. A pyruvate-binding site is contributed by glutamate 477.

This sequence belongs to the TPP enzyme family. In terms of assembly, homotetramer. Mg(2+) is required as a cofactor. The cofactor is thiamine diphosphate.

The protein resides in the cytoplasm. It is found in the nucleus. The catalysed reaction is pyruvate + H(+) = acetaldehyde + CO2. It carries out the reaction 3-methyl-2-oxobutanoate + H(+) = 2-methylpropanal + CO2. The enzyme catalyses (S)-3-methyl-2-oxopentanoate + H(+) = 2-methylbutanal + CO2. It catalyses the reaction indole-3-pyruvate + H(+) = indole-3-acetaldehyde + CO2. The catalysed reaction is 3-phenylpyruvate + H(+) = 2-phenylacetaldehyde + CO2. It carries out the reaction 2-oxobutanoate + H(+) = propanal + CO2. The enzyme catalyses 2-oxopentanoate + H(+) = butanal + CO2. It catalyses the reaction 2 acetaldehyde = acetoin. The catalysed reaction is acetaldehyde + pyruvate + H(+) = acetoin + CO2. Its pathway is fermentation; ethanol fermentation. It participates in amino-acid degradation; Ehrlich pathway. Allosterically activated by its substrate, pyruvate. Second most abundant of three pyruvate decarboxylases (PDC1, PDC5, PDC6) implicated in the nonoxidative conversion of pyruvate to acetaldehyde and carbon dioxide during alcoholic fermentation. Most of the produced acetaldehyde is subsequently reduced to ethanol, but some is required for cytosolic acetyl-CoA production for biosynthetic pathways. The enzyme is also one of five 2-oxo acid decarboxylases (PDC1, PDC5, PDC6, ARO10, and THI3) able to decarboxylate more complex 2-oxo acids (alpha-keto-acids) than pyruvate, which seem mainly involved in amino acid catabolism. Here the enzyme catalyzes the decarboxylation of amino acids, which, in a first step, have been transaminated to the corresponding 2-oxo acids. In a third step, the resulting aldehydes are reduced to alcohols, collectively referred to as fusel oils or alcohols. Its preferred substrates are the transaminated amino acids derived from threonine (2-oxobutanoate), norvaline (2-oxopentanoate), valine (3-methyl-2-oxobutanoate, also alpha-keto-isovalerate), isoleucine ((3S)-3-methyl-2-oxopentanoate, also alpha-keto-beta-methylvalerate), phenylalanine (phenylpyruvate), and tryptophan (3-(indol-3-yl)pyruvate), whereas transaminated leucine is no substrate. In a side-reaction the carbanionic intermediate (or active aldehyde) generated by decarboxylation or by activation of an aldehyde can react with an aldehyde via condensation (or carboligation) yielding a 2-hydroxy ketone, collectively called acyloins. In Saccharomyces cerevisiae (strain ATCC 204508 / S288c) (Baker's yeast), this protein is Pyruvate decarboxylase isozyme 2 (PDC5).